Consider the following 491-residue polypeptide: F-box/LRR-repeat protein 7 (491 aa).

A disordered region spans residues 1-79 (MGANNGKQYG…GRGSSTSSSS (79 aa)). The span at 16–26 (SSSVSSDVSSS) shows a compositional bias: low complexity. Polar residues predominate over residues 27 to 55 (TDHTPTKAQRNVATSEDSDLSMRTLSTPS). The F-box domain occupies 111-157 (QASIDRLPDHSMVQIFSFLPTNQLCRCARVCRRWYNLAWDPRLWRTI). LRR repeat units follow at residues 185–210 (CLML…IAQC), 211–236 (CPEL…VVSL), 237–262 (CPNL…EASI), 271–296 (QISI…IAAH), 297–322 (CTQL…LVIY), 323–348 (CTSI…IAKL), 349–374 (ESRL…VAKY), 375–400 (CSKL…LAKN), 401–426 (CTKL…LALN), and 427–452 (CFNL…VAAN).

It belongs to the FBXL7 family. As to quaternary structure, part of the SCF (SKP1-CUL1-F-box) E3 ubiquitin-protein ligase complex SCF(FBXL7) composed of CUL1, SKP1, RBX1 and FBXL7. Interacts with AURKA; interaction takes place during mitosis but not in interphase. Interacts with BIRC5; this interaction allows BIRC5 to be polyubiquitinated by the SCF(FBXL7) E3 ubiquitin-protein ligase complex.

The protein resides in the cytoplasm. It is found in the cytoskeleton. The protein localises to the microtubule organizing center. Its subcellular location is the centrosome. The protein operates within protein modification; protein ubiquitination. Its function is as follows. Substrate recognition component of a SCF (SKP1-CUL1-F-box protein) E3 ubiquitin-protein ligase complex. During mitosis, it mediates the ubiquitination and subsequent proteasomal degradation of AURKA, causing mitotic arrest. It also regulates mitochondrial function by mediating the ubiquitination and proteasomal degradation of the apoptosis inhibitor BIRC5. This chain is F-box/LRR-repeat protein 7 (Fbxl7), found in Mus musculus (Mouse).